A 1351-amino-acid polypeptide reads, in one-letter code: Transcriptional regulator ovo (1351 aa).

Residues 1–31 are required for Ubr3 binding and tal-dependent proteolytic processing; that stretch reads MPKIFLIKNRLHQQQQRLLESQNLLQHKNQD. Disordered stretches follow at residues 22–77, 100–119, 184–397, 447–554, 640–665, 778–807, 834–887, 916–1000, 1023–1044, and 1113–1192; these read QNLL…SDQQ, LDHL…NPNQ, NSPI…SDEE, AGHG…HFNA, SNSK…GQTS, DDEE…PVEQ, GSNQ…YQHA, LLSQ…PSPT, PMSS…GSSN, and SKHG…DSSS. Pro residues predominate over residues 49–60; that stretch reads SPTPTSQPPPEP. 2 stretches are compositionally biased toward low complexity: residues 61-72 and 104-119; these read QGQGQQVLGQVP and NQNQ…NPNQ. Residues 205–232 show a composition bias toward basic and acidic residues; that stretch reads EKEKPAEREREKSDERTEQVEKEERVER. Over residues 233–242 the composition is skewed to acidic residues; that stretch reads EEEEDDEVDV. Residues 262-272 are compositionally biased toward basic and acidic residues; it reads QRKEYPQEPKD. Pro residues predominate over residues 324–340; that stretch reads TPPPADQRPSPPPPRDP. Over residues 447–486 the composition is skewed to low complexity; that stretch reads AGHGRNSSSSSGAAGQGFQSSGFGSQNSGSGSSSGNQNAG. The span at 487–505 shows a compositional bias: gly residues; it reads SGAGSPGSGAGGGGGMGGG. The span at 530 to 552 shows a compositional bias: polar residues; that stretch reads KSGQQSTASNNTGQSPGANHSHF. Residues 644 to 653 show a composition bias toward basic residues; it reads FHNHHHHHQH. Polar residues predominate over residues 793–807; the sequence is STPSLTPDSVTPVEQ. Low complexity-rich tracts occupy residues 835–878, 916–962, 970–979, 1025–1044, and 1121–1175; these read SNQQ…HVQQ, LLSQ…QQQQ, QQQQQPQPQS, SSSS…GSSN, and HQQQ…HGSA. C2H2-type zinc fingers lie at residues 1197–1219, 1225–1247, 1253–1276, and 1292–1315; these read FVCR…MKCH, YLCT…TRTH, YKCN…QKVH, and YVCE…KNNH.

As to quaternary structure, interacts (via N-terminus) with Ubr3; the interaction is mediated by tal. In terms of processing, N-terminus is proteolytically cleaved and ubiquitinated via a tal-dependent mechanism, leading to the proteolytic degradation of the N-terminus and the production of transcriptional activator shavenbaby, a truncated form with transcriptional activator activity.

The protein localises to the cytoplasm. The protein resides in the nucleus. It is found in the nucleoplasm. Transcriptional regulator with essential functions in the germline and soma. Plays an essential role in regulating the formation of apical cell extensions such as denticles and aristae, and initiating cytoskeletal remodeling during epidermal differentiation. Its function is as follows. Transcriptional repressor which functions in postembryonic development. The full-length unprocessed form acts as a transcriptional repressor (Transcriptional repressor svb). In terms of biological role, transcriptional activator which initiates trichome development and also promotes tarsal joint development. Has an essential somatic role regulating the tal-dependent formation of trichomes, and initiating cytoskeletal remodeling during epidermal differentiation. Function with SoxN is required for correct denticle morphogenesis on the embryonic epidermis. SoxN and svb appear to act both independently and in conjunction with each other to activate certain genes involved in denticle morphogenesis; Svb appears to be involved in regulating denticle length whereas SoxN regulates the denticle base circumference. Also functions in the development of other apical cell extensions such as bristles. Also has an important role in tarsal joint development, repressing expression of the N ligand Dl and defining its signaling boundary. Functionally, transcriptional repressor which is specifically involved in female germline development, where it functions antagonistically to isoform D. Negatively regulates expression of otu and may also have autoregulatory activity. Negatively regulates expression of piwi in the primordial germ cells (PGCs). Transcriptional activator which is specifically involved in female germline development, where it functions antagonistically to isoform C. Necessary and sufficient for normal oogenesis. Required in the primordial germ cells (PGCs) for normal development of male and female germline cells. Plays a role in germline sex determination. Binds the promoter DNA and positively regulates the transcription of the otu gene in a stage-specific manner. May have autoregulatory activity. The chain is Transcriptional regulator ovo from Drosophila melanogaster (Fruit fly).